The chain runs to 237 residues: tRNA (guanine-N(7)-)-methyltransferase (237 aa).

S-adenosyl-L-methionine-binding residues include Glu-68, Glu-93, Asp-120, and Asp-143. Asp-143 is a catalytic residue. Substrate is bound by residues Lys-147, Asp-179, and 216–219 (TKFE).

Belongs to the class I-like SAM-binding methyltransferase superfamily. TrmB family.

It catalyses the reaction guanosine(46) in tRNA + S-adenosyl-L-methionine = N(7)-methylguanosine(46) in tRNA + S-adenosyl-L-homocysteine. It functions in the pathway tRNA modification; N(7)-methylguanine-tRNA biosynthesis. Its function is as follows. Catalyzes the formation of N(7)-methylguanine at position 46 (m7G46) in tRNA. The protein is tRNA (guanine-N(7)-)-methyltransferase of Shewanella pealeana (strain ATCC 700345 / ANG-SQ1).